A 488-amino-acid chain; its full sequence is Ribulose bisphosphate carboxylase large chain (488 aa).

Substrate contacts are provided by Asn127 and Thr177. Lys179 acts as the Proton acceptor in catalysis. Lys181 lines the substrate pocket. Lys205, Asp207, and Glu208 together coordinate Mg(2+). At Lys205 the chain carries N6-carboxylysine. His297 acts as the Proton acceptor in catalysis. 3 residues coordinate substrate: Arg298, His330, and Ser382.

Belongs to the RuBisCO large chain family. Type I subfamily. Heterohexadecamer of 8 large chains and 8 small chains. Mg(2+) serves as cofactor.

The protein resides in the plastid. The protein localises to the chloroplast. The enzyme catalyses 2 (2R)-3-phosphoglycerate + 2 H(+) = D-ribulose 1,5-bisphosphate + CO2 + H2O. The catalysed reaction is D-ribulose 1,5-bisphosphate + O2 = 2-phosphoglycolate + (2R)-3-phosphoglycerate + 2 H(+). Functionally, ruBisCO catalyzes two reactions: the carboxylation of D-ribulose 1,5-bisphosphate, the primary event in carbon dioxide fixation, as well as the oxidative fragmentation of the pentose substrate in the photorespiration process. Both reactions occur simultaneously and in competition at the same active site. In Pyropia suborbiculata (Red alga), this protein is Ribulose bisphosphate carboxylase large chain.